We begin with the raw amino-acid sequence, 295 residues long: Shikimate dehydrogenase (NADP(+)) (295 aa).

Shikimate is bound by residues 18–20 (SRS) and Thr-66. Lys-70 (proton acceptor) is an active-site residue. Shikimate contacts are provided by Asn-91 and Asp-106. NADP(+) is bound by residues 130-134 (GNGGA) and Met-235. Residue Tyr-237 coordinates shikimate. Residue Gly-258 participates in NADP(+) binding.

This sequence belongs to the shikimate dehydrogenase family. Homodimer.

It catalyses the reaction shikimate + NADP(+) = 3-dehydroshikimate + NADPH + H(+). It functions in the pathway metabolic intermediate biosynthesis; chorismate biosynthesis; chorismate from D-erythrose 4-phosphate and phosphoenolpyruvate: step 4/7. Its function is as follows. Involved in the biosynthesis of the chorismate, which leads to the biosynthesis of aromatic amino acids. Catalyzes the reversible NADPH linked reduction of 3-dehydroshikimate (DHSA) to yield shikimate (SA). The sequence is that of Shikimate dehydrogenase (NADP(+)) from Chlorobium phaeobacteroides (strain DSM 266 / SMG 266 / 2430).